The primary structure comprises 175 residues: Alkyl hydroperoxide reductase AhpD (175 aa).

Catalysis depends on C131, which acts as the Proton donor. A disulfide bridge links C131 with C134. C134 serves as the catalytic Cysteine sulfenic acid (-SOH) intermediate.

Belongs to the AhpD family.

It catalyses the reaction N(6)-[(R)-dihydrolipoyl]-L-lysyl-[lipoyl-carrier protein] + a hydroperoxide = N(6)-[(R)-lipoyl]-L-lysyl-[lipoyl-carrier protein] + an alcohol + H2O. In terms of biological role, antioxidant protein with alkyl hydroperoxidase activity. Required for the reduction of the AhpC active site cysteine residues and for the regeneration of the AhpC enzyme activity. The sequence is that of Alkyl hydroperoxide reductase AhpD from Brucella canis (strain ATCC 23365 / NCTC 10854 / RM-666).